A 432-amino-acid chain; its full sequence is Acyl-coenzyme A thioesterase 3 (432 aa).

Active-site charge relay system residues include Ser-243, Asp-337, and His-371. Positions 430–432 match the Microbody targeting signal motif; it reads AKL.

This sequence belongs to the C/M/P thioester hydrolase family. In terms of tissue distribution, widely expressed. Highly expressed in the kidney, expressed at low level in the liver. Isoform 2 is expressed in the kidney, but not in the liver. Isoform 1 is liver-specific. Highly expressed in kidney (at protein level).

Its subcellular location is the peroxisome. It carries out the reaction hexadecanoyl-CoA + H2O = hexadecanoate + CoA + H(+). The catalysed reaction is decanoyl-CoA + H2O = decanoate + CoA + H(+). The enzyme catalyses dodecanoyl-CoA + H2O = dodecanoate + CoA + H(+). It catalyses the reaction tetradecanoyl-CoA + H2O = tetradecanoate + CoA + H(+). It carries out the reaction octadecanoyl-CoA + H2O = octadecanoate + CoA + H(+). The catalysed reaction is eicosanoyl-CoA + H2O = eicosanoate + CoA + H(+). The enzyme catalyses (9Z)-octadecenoyl-CoA + H2O = (9Z)-octadecenoate + CoA + H(+). It catalyses the reaction (9Z,12Z)-octadecadienoyl-CoA + H2O = (9Z,12Z)-octadecadienoate + CoA + H(+). It carries out the reaction (5Z,8Z,11Z,14Z)-eicosatetraenoyl-CoA + H2O = (5Z,8Z,11Z,14Z)-eicosatetraenoate + CoA + H(+). The catalysed reaction is tetracosanoyl-CoA + H2O = tetracosanoate + CoA + H(+). The enzyme catalyses hexacosanoyl-CoA + H2O = hexacosanoate + CoA + H(+). It catalyses the reaction docosanoyl-CoA + H2O = docosanoate + CoA + H(+). It carries out the reaction (9Z)-hexadecenoyl-CoA + H2O = (9Z)-hexadecenoate + CoA + H(+). It functions in the pathway lipid metabolism; fatty acid metabolism. Its function is as follows. Catalyzes the hydrolysis of acyl-CoAs into free fatty acids and coenzyme A (CoASH), regulating their respective intracellular levels. Mainly active on long-chain acyl-CoAs. May have a function in termination of beta-oxidation of fatty acids. The polypeptide is Acyl-coenzyme A thioesterase 3 (Acot3) (Mus musculus (Mouse)).